Consider the following 198-residue polypeptide: Dephospho-CoA kinase (198 aa).

Positions 4–198 constitute a DPCK domain; the sequence is FLGLTGGIAS…LSDLLQEIGR (195 aa). Residue 12 to 17 coordinates ATP; it reads ASGKST.

Belongs to the CoaE family.

It localises to the cytoplasm. It carries out the reaction 3'-dephospho-CoA + ATP = ADP + CoA + H(+). The protein operates within cofactor biosynthesis; coenzyme A biosynthesis; CoA from (R)-pantothenate: step 5/5. Catalyzes the phosphorylation of the 3'-hydroxyl group of dephosphocoenzyme A to form coenzyme A. This is Dephospho-CoA kinase from Lactobacillus johnsonii (strain CNCM I-12250 / La1 / NCC 533).